An 82-amino-acid chain; its full sequence is MRLVVCLVFLASFALVCQGQVYKGGYTRPIPRPPPFVRPLPGGPIGPYNGRPVSCRGISFSQARSCCSRLGRCCHVGKGYSG.

The N-terminal stretch at 1 to 19 is a signal peptide; it reads MRLVVCLVFLASFALVCQG. Pyrrolidone carboxylic acid is present on Gln-20. Cystine bridges form between Cys-55–Cys-73 and Cys-67–Cys-74. The residue at position 81 (Ser-81) is a Serine amide.

It belongs to the penaeidin family.

The protein resides in the cytoplasmic granule. In terms of biological role, antibacterial and antifungal activity. Presents chitin-binding activity. The chain is Penaeidin-3i from Penaeus vannamei (Whiteleg shrimp).